Reading from the N-terminus, the 409-residue chain is Putative lipoate-protein ligase A (409 aa).

The BPL/LPL catalytic domain maps to 146–330 (GPDNCRLLFY…RFQKTFKVDG (185 aa)). ATP is bound by residues R188, 193 to 196 (GTVL), and K249. K249 contributes to the (R)-lipoate binding site.

Belongs to the LplA family. Monomer.

The catalysed reaction is L-lysyl-[lipoyl-carrier protein] + (R)-lipoate + ATP = N(6)-[(R)-lipoyl]-L-lysyl-[lipoyl-carrier protein] + AMP + diphosphate + H(+). The protein operates within protein modification; protein lipoylation via exogenous pathway; protein N(6)-(lipoyl)lysine from lipoate: step 1/2. It participates in protein modification; protein lipoylation via exogenous pathway; protein N(6)-(lipoyl)lysine from lipoate: step 2/2. Functionally, catalyzes both the ATP-dependent activation of exogenously supplied lipoate to lipoyl-AMP and the transfer of the activated lipoyl onto the lipoyl domains of lipoate-dependent enzymes. In Saccharomyces cerevisiae (strain RM11-1a) (Baker's yeast), this protein is Putative lipoate-protein ligase A (AIM22).